Consider the following 390-residue polypeptide: Phosphopentomutase (390 aa).

Residues aspartate 11, aspartate 283, histidine 288, aspartate 324, histidine 325, and histidine 336 each contribute to the Mn(2+) site.

The protein belongs to the phosphopentomutase family. Requires Mn(2+) as cofactor.

It is found in the cytoplasm. It carries out the reaction 2-deoxy-alpha-D-ribose 1-phosphate = 2-deoxy-D-ribose 5-phosphate. The enzyme catalyses alpha-D-ribose 1-phosphate = D-ribose 5-phosphate. Its pathway is carbohydrate degradation; 2-deoxy-D-ribose 1-phosphate degradation; D-glyceraldehyde 3-phosphate and acetaldehyde from 2-deoxy-alpha-D-ribose 1-phosphate: step 1/2. Functionally, isomerase that catalyzes the conversion of deoxy-ribose 1-phosphate (dRib-1-P) and ribose 1-phosphate (Rib-1-P) to deoxy-ribose 5-phosphate (dRib-5-P) and ribose 5-phosphate (Rib-5-P), respectively. This is Phosphopentomutase from Alkaliphilus oremlandii (strain OhILAs) (Clostridium oremlandii (strain OhILAs)).